The following is a 217-amino-acid chain: IMPACT family member YvyE (217 aa).

Belongs to the IMPACT family.

The sequence is that of IMPACT family member YvyE (yvyE) from Bacillus subtilis (strain 168).